We begin with the raw amino-acid sequence, 1030 residues long: uncharacterized protein (1030 aa).

Residues 51–86 form an SWIM-type zinc finger; it reads IKVSFTAKDGELTCKCSCLANVDNCVHIVAVLLKYH. Residues 590–751 form the Helicase ATP-binding domain; it reads RGLEENKFGG…WSCFDFVLPS (162 aa). 603–610 is a binding site for ATP; the sequence is DEMGLGKT. Residues 702–705 carry the DEAQ box motif; it reads DEAQ. The Helicase C-terminal domain maps to 867–1021; that stretch reads ALEIIHEAIE…EDVNFFESLT (155 aa).

The protein belongs to the SNF2/RAD54 helicase family.

This is an uncharacterized protein from Mycoplasma pneumoniae (strain ATCC 29342 / M129 / Subtype 1) (Mycoplasmoides pneumoniae).